A 114-amino-acid polypeptide reads, in one-letter code: Iron-sulfur cluster insertion protein ErpA (114 aa).

Iron-sulfur cluster-binding residues include Cys-42, Cys-106, and Cys-108.

This sequence belongs to the HesB/IscA family. In terms of assembly, homodimer. Iron-sulfur cluster is required as a cofactor.

In terms of biological role, required for insertion of 4Fe-4S clusters for at least IspG. In Erwinia tasmaniensis (strain DSM 17950 / CFBP 7177 / CIP 109463 / NCPPB 4357 / Et1/99), this protein is Iron-sulfur cluster insertion protein ErpA.